The sequence spans 779 residues: MVKRGCCHRKMVNHKGCLVSGIFLAVIGAVLFILAFALLPHLINQTTQNAVIQAVIVDSTSSQRYNDWAGQQSIENYYQQYFYAWNLTNPNEFLNGSIPIFETVGPFNYKYEFNFSNVTFQDGGNLATYTQSKSFIYQSDMSPNDPNEIMITNINPAYLGLMFQLAPNAELLDNMPAENLLIALSGCGQMRLFLEYLSSDNFTNIVYFTQNPKLYQEQYLNILKSLNGDEQYFYQQWANATSIPQKGNGWYGMLVSSVNNNNESSNISILSAKLLFNSSNENSILNQEIGSTLWINALLGDKTSITVLTSELQLTVDQIDMILNWWLNDFSKVYTESYVNEICDIPDISMLGVCQFVTGNALNGRSISNYTFLTQPFDQGPIEIPLLYQSIGIDVKLSVSVQQAYKSLFNESDSNSILNLNGLVNFLTASKSFDTFKQYNVTLFDAIKIIGYATAELYEQYNKPTILGLYEKYGGLIVTRSMDDWLWNCQDGILDYLGVDQPCALQQNNTVNKPSTIFTGQQDLSMTNQIFEFQEQTFLTCWNGSVQVEGFTESGQFPPLQSDPPQTMTLFEENVIRPVQLELSGDSQVQGIDTKRYYLVNNSFPISTTFKTTIPGFANLTDIQNLPIYVSLWDMYEVPPQYSSNNLQGLNQTYQSAQVPLDLEPITGNALYYNLKLQINLAIPEFSNWFSSNSTFKNMKSNVFYPILKIGQTATPSQSNIDLLNSQFKLIKILGFVPVIVVSIIGGIILIAGISMFAFGFKKLRQQKQQGYQAIINNE.

The Cytoplasmic portion of the chain corresponds to 1–17; the sequence is MVKRGCCHRKMVNHKGC. A helical transmembrane segment spans residues 18–38; that stretch reads LVSGIFLAVIGAVLFILAFAL. Residues 39 to 732 lie on the Lumenal side of the membrane; the sequence is LPHLINQTTQ…LLNSQFKLIK (694 aa). 19 N-linked (GlcNAc...) asparagine glycosylation sites follow: Asn44, Asn86, Asn95, Asn114, Asn117, Asn201, Asn239, Asn262, Asn266, Asn277, Asn369, Asn410, Asn440, Asn508, Asn543, Asn601, Asn619, Asn651, and Asn693. Residues 733-753 form a helical membrane-spanning segment; sequence ILGFVPVIVVSIIGGIILIAG. The Cytoplasmic segment spans residues 754–779; that stretch reads ISMFAFGFKKLRQQKQQGYQAIINNE. Residues 771–774 carry the Tyrosine-type lysosomal sorting signal motif; it reads GYQA.

This sequence belongs to the CD36 family. Heavily glycosylated.

The protein localises to the lysosome membrane. May act as a lysosomal receptor. May be involved in macropinocytosis and fluid phase exocytosis. Binds to the anionic phospholipid phosphoinositol 4,5-bisphosphate, but not to phosphatidylcholine and only weakly to phosphatidylserine. The sequence is that of Lysosome membrane protein 2-A (lmpA) from Dictyostelium discoideum (Social amoeba).